The primary structure comprises 447 residues: tRNA-2-methylthio-N(6)-dimethylallyladenosine synthase (447 aa).

Positions 1–116 constitute an MTTase N-terminal domain; the sequence is MYIRTFGCQM…LPDLIKRRRA (116 aa). C8, C45, C79, C153, C157, and C160 together coordinate [4Fe-4S] cluster. In terms of domain architecture, Radical SAM core spans 139–372; that stretch reads RVDGATAFVS…QALINQQAAA (234 aa). The TRAM domain occupies 375–438; it reads QGMIGTRQRV…TNSLRGRVAG (64 aa).

Belongs to the methylthiotransferase family. MiaB subfamily. Monomer. [4Fe-4S] cluster serves as cofactor.

Its subcellular location is the cytoplasm. The enzyme catalyses N(6)-dimethylallyladenosine(37) in tRNA + (sulfur carrier)-SH + AH2 + 2 S-adenosyl-L-methionine = 2-methylsulfanyl-N(6)-dimethylallyladenosine(37) in tRNA + (sulfur carrier)-H + 5'-deoxyadenosine + L-methionine + A + S-adenosyl-L-homocysteine + 2 H(+). Functionally, catalyzes the methylthiolation of N6-(dimethylallyl)adenosine (i(6)A), leading to the formation of 2-methylthio-N6-(dimethylallyl)adenosine (ms(2)i(6)A) at position 37 in tRNAs that read codons beginning with uridine. The protein is tRNA-2-methylthio-N(6)-dimethylallyladenosine synthase of Bordetella pertussis (strain Tohama I / ATCC BAA-589 / NCTC 13251).